A 908-amino-acid polypeptide reads, in one-letter code: UPF0182 protein Csac_0864 (908 aa).

The next 7 helical transmembrane spans lie at 22 to 42, 62 to 82, 98 to 118, 166 to 186, 208 to 228, 253 to 273, and 286 to 306; these read FVIS…DLFL, FYVK…VFFV, ISLL…ALIA, FLFY…IVLY, HIFF…KYEM, YFRL…YFFI, and SYIG…YFVV.

Belongs to the UPF0182 family.

Its subcellular location is the cell membrane. The sequence is that of UPF0182 protein Csac_0864 from Caldicellulosiruptor saccharolyticus (strain ATCC 43494 / DSM 8903 / Tp8T 6331).